Consider the following 429-residue polypeptide: MQSYTVRPAKGIRGEITVPGDKSISHRSIMLGSIARGETTVRGFLRGEDNIATLNAFRAMGVVIDDDGETLRIAGKGLRGLAEPTDVLDCGNSGTSMRLLTGLLAPQRFYSVLSGDQYLRRRPMRRVVEPLSRMGACIHGREGGEKAPLAIVGRDLKGISYTSSVASAQVKSALMLAGLYAEGETRVTEPHLSRDHSERMFRHFGADIENGPAGVVVRGGRELEGRDIIVPGDISSAAFFMVAALIVPGSELLIRGVGVNPTRTGIIDILTAMGGSLELLDQREVSGEPVADILVRSSRLKGIEIAGEVVPRAIDEFPVICVAAAVAEGRTVVREARELRVKETDRIAAMATNLRAVGVTVTESEDGMDIEGAEQIAAGTVESFGDHRIAMSMLIAGLTAGGDITVTDTECIGTSFPTFFPLLEKVAAR.

3-phosphoshikimate is bound by residues Lys22, Ser23, and Arg27. Residue Lys22 participates in phosphoenolpyruvate binding. Residues Gly94 and Arg122 each contribute to the phosphoenolpyruvate site. Positions 167, 169, 315, and 342 each coordinate 3-phosphoshikimate. Gln169 is a binding site for phosphoenolpyruvate. Asp315 acts as the Proton acceptor in catalysis. Phosphoenolpyruvate-binding residues include Arg346 and Arg388.

Belongs to the EPSP synthase family. As to quaternary structure, monomer.

Its subcellular location is the cytoplasm. It catalyses the reaction 3-phosphoshikimate + phosphoenolpyruvate = 5-O-(1-carboxyvinyl)-3-phosphoshikimate + phosphate. It participates in metabolic intermediate biosynthesis; chorismate biosynthesis; chorismate from D-erythrose 4-phosphate and phosphoenolpyruvate: step 6/7. Functionally, catalyzes the transfer of the enolpyruvyl moiety of phosphoenolpyruvate (PEP) to the 5-hydroxyl of shikimate-3-phosphate (S3P) to produce enolpyruvyl shikimate-3-phosphate and inorganic phosphate. This is 3-phosphoshikimate 1-carboxyvinyltransferase from Geobacter metallireducens (strain ATCC 53774 / DSM 7210 / GS-15).